A 434-amino-acid polypeptide reads, in one-letter code: T-box transcription factor T homolog (434 aa).

Residues 50 to 220 (LWKKFHKLTN…YNPFAKAFLD (171 aa)) constitute a DNA-binding region (T-box). Polar residues-rich tracts occupy residues 355–364 (SGFSHVSSPQ) and 376–385 (HPTSSHQHNL). The tract at residues 355–385 (SGFSHVSSPQSPLPTGLFRNPHPTSSHQHNL) is disordered.

In terms of tissue distribution, in the developing embryo, expressed in the mesenchyme founder cells, vegetal plate of the mesenchyme blastula, extending tip of the invaginating archenteron and, later, in the secondary mesenchyme cells.

The protein localises to the nucleus. Functionally, involved in the transcriptional regulation of genes required for mesoderm differentiation. This is T-box transcription factor T homolog from Hemicentrotus pulcherrimus (Sea urchin).